Reading from the N-terminus, the 273-residue chain is Zinc finger protein AZF2 (273 aa).

Residues 33–64 (LKRKRSKRQRSHSPSSSSSSPPRSRPKSQNQD) form a disordered region. Basic residues predominate over residues 34–43 (KRKRSKRQRS). Low complexity predominate over residues 44–54 (HSPSSSSSSPP). C2H2-type zinc fingers lie at residues 106-128 (YKCNVCEKAFPSYQALGGHKASH) and 165-187 (HECSICHKVFPTGQALGGHKRCH). Positions 195-215 (GGGGGSKSISHSGSVSSTVSE) are disordered. The segment covering 201-213 (KSISHSGSVSSTV) has biased composition (low complexity).

As to expression, expressed in roots, radicles, cotyledons, hypocotyls, leaf veins, stems, sepals, petals, stamens, placenta, funiculi and maturated seeds.

The protein localises to the nucleus. In terms of biological role, transcriptional repressor involved in the inhibition of plant growth under abiotic stress conditions. Can repress the expression of various genes, including osmotic stress and abscisic acid-repressive genes and auxin-inducible genes, by binding to their promoter regions in a DNA sequence-specific manner. Acts as a negative regulator of abscisic acid (ABA) signaling during seed germination. Probably involved in jasmonate (JA) early signaling response. May regulate the expression of the JA biosynthesis gene LOX3 and control the expression of TIFY10A/JAZ1, a key repressor in the JA signaling cascade. May act as a positive regulator of leaf senescence. Has been identified as a suppressor of the deficiency of yeast snf4 mutant to grow on non-fermentable carbon source. This is Zinc finger protein AZF2 (AZF2) from Arabidopsis thaliana (Mouse-ear cress).